The chain runs to 296 residues: Phosphatidylglycerol--prolipoprotein diacylglyceryl transferase (296 aa).

4 helical membrane-spanning segments follow: residues 10 to 30, 57 to 77, 92 to 112, and 119 to 139; these read IAFSLGPVQVHWYGLMYLAAF, LLFYGMLGVVLGGRIGYMLFY, VWEGGMSFHGGLLGVLIACWL, and LHFFDVMDFVAPLVPLGLGFG. Position 140 (Arg140) interacts with a 1,2-diacyl-sn-glycero-3-phospho-(1'-sn-glycerol). Transmembrane regions (helical) follow at residues 194–214, 220–240, and 254–274; these read QLYEAALEGVVMFVVLWTFSM, YAVSGLFALLYGVFRFIVEFV, and WLTMGQILSLPLIAVGLVLLA.

This sequence belongs to the Lgt family.

Its subcellular location is the cell inner membrane. It catalyses the reaction L-cysteinyl-[prolipoprotein] + a 1,2-diacyl-sn-glycero-3-phospho-(1'-sn-glycerol) = an S-1,2-diacyl-sn-glyceryl-L-cysteinyl-[prolipoprotein] + sn-glycerol 1-phosphate + H(+). It functions in the pathway protein modification; lipoprotein biosynthesis (diacylglyceryl transfer). Functionally, catalyzes the transfer of the diacylglyceryl group from phosphatidylglycerol to the sulfhydryl group of the N-terminal cysteine of a prolipoprotein, the first step in the formation of mature lipoproteins. The sequence is that of Phosphatidylglycerol--prolipoprotein diacylglyceryl transferase from Xanthomonas euvesicatoria pv. vesicatoria (strain 85-10) (Xanthomonas campestris pv. vesicatoria).